Reading from the N-terminus, the 126-residue chain is Histone H2B type 1-K (126 aa).

Residues Met-1–Lys-12 show a composition bias toward low complexity. Positions Met-1–Glu-36 are disordered. Pro-2 bears the N-acetylproline mark. ADP-ribosyl glutamic acid is present on Glu-3. N6-(2-hydroxyisobutyryl)lysine; alternate is present on Lys-6. Lys-6 is subject to N6-(beta-hydroxybutyryl)lysine; alternate. Lys-6 bears the N6-acetyllysine; alternate mark. N6-butyryllysine; alternate is present on Lys-6. At Lys-6 the chain carries N6-crotonyllysine; alternate. An N6-lactoyllysine; alternate modification is found at Lys-6. Lys-6 is covalently cross-linked (Glycyl lysine isopeptide (Lys-Gly) (interchain with G-Cter in SUMO2); alternate). At Ser-7 the chain carries ADP-ribosylserine. Residue Lys-12 is modified to N6-(beta-hydroxybutyryl)lysine; alternate. N6-acetyllysine; alternate is present on residues Lys-12 and Lys-13. N6-crotonyllysine; alternate is present on residues Lys-12 and Lys-13. Lys-12 carries the post-translational modification N6-lactoyllysine; alternate. Lys-13 carries the N6-(2-hydroxyisobutyryl)lysine; alternate modification. Phosphoserine; by STK4/MST1 is present on Ser-15. N6-acetyllysine; alternate occurs at positions 16, 17, 21, and 24. 5 positions are modified to N6-crotonyllysine; alternate: Lys-16, Lys-17, Lys-21, Lys-24, and Lys-35. An N6-lactoyllysine; alternate mark is found at Lys-16, Lys-17, Lys-21, and Lys-24. Lys-17 carries the post-translational modification N6-glutaryllysine; alternate. 3 positions are modified to N6-(2-hydroxyisobutyryl)lysine; alternate: Lys-21, Lys-24, and Lys-35. Position 21 is an N6-(beta-hydroxybutyryl)lysine; alternate (Lys-21). The residue at position 21 (Lys-21) is an N6-butyryllysine; alternate. Lys-21 is covalently cross-linked (Glycyl lysine isopeptide (Lys-Gly) (interchain with G-Cter in SUMO2); alternate). An N6-(beta-hydroxybutyryl)lysine; alternate modification is found at Lys-35. N6-glutaryllysine; alternate is present on Lys-35. At Lys-35 the chain carries N6-succinyllysine; alternate. Lys-35 is covalently cross-linked (Glycyl lysine isopeptide (Lys-Gly) (interchain with G-Cter in ubiquitin); alternate). Glu-36 is subject to PolyADP-ribosyl glutamic acid. The residue at position 37 (Ser-37) is a Phosphoserine; by AMPK. N6-(2-hydroxyisobutyryl)lysine; alternate is present on residues Lys-44, Lys-47, and Lys-58. The residue at position 44 (Lys-44) is an N6-lactoyllysine; alternate. Residues Lys-44 and Lys-47 each carry the N6-glutaryllysine; alternate modification. An N6-methyllysine; alternate modification is found at Lys-47. The residue at position 58 (Lys-58) is an N6,N6-dimethyllysine; alternate. Dimethylated arginine is present on Arg-80. Lys-86 is subject to N6-(2-hydroxyisobutyryl)lysine; alternate. Lys-86 bears the N6-acetyllysine; alternate mark. Lys-86 is subject to N6-lactoyllysine; alternate. The residue at position 86 (Lys-86) is an N6,N6,N6-trimethyllysine; alternate. Omega-N-methylarginine is present on residues Arg-87 and Arg-93. At Lys-109 the chain carries N6-(2-hydroxyisobutyryl)lysine; alternate. At Lys-109 the chain carries N6-lactoyllysine; alternate. Residue Lys-109 is modified to N6-glutaryllysine; alternate. Lys-109 carries the post-translational modification N6-methyllysine; alternate. Ser-113 carries an O-linked (GlcNAc) serine glycan. Residue Thr-116 is modified to Phosphothreonine. N6-(2-hydroxyisobutyryl)lysine; alternate occurs at positions 117 and 121. The residue at position 117 (Lys-117) is an N6-(beta-hydroxybutyryl)lysine; alternate. Lys-117 and Lys-121 each carry N6-lactoyllysine; alternate. 2 positions are modified to N6-glutaryllysine; alternate: Lys-117 and Lys-121. Lys-117 and Lys-121 each carry N6-succinyllysine; alternate. Lys-117 is modified (N6-methylated lysine; alternate). Lys-121 participates in a covalent cross-link: Glycyl lysine isopeptide (Lys-Gly) (interchain with G-Cter in ubiquitin); alternate.

It belongs to the histone H2B family. The nucleosome is a histone octamer containing two molecules each of H2A, H2B, H3 and H4 assembled in one H3-H4 heterotetramer and two H2A-H2B heterodimers. The octamer wraps approximately 147 bp of DNA. In terms of processing, monoubiquitination at Lys-35 (H2BK34Ub) by the MSL1/MSL2 dimer is required for histone H3 'Lys-4' (H3K4me) and 'Lys-79' (H3K79me) methylation and transcription activation at specific gene loci, such as HOXA9 and MEIS1 loci. Similarly, monoubiquitination at Lys-121 (H2BK120Ub) by the RNF20/40 complex gives a specific tag for epigenetic transcriptional activation and is also prerequisite for histone H3 'Lys-4' and 'Lys-79' methylation. It also functions cooperatively with the FACT dimer to stimulate elongation by RNA polymerase II. H2BK120Ub also acts as a regulator of mRNA splicing: deubiquitination by USP49 is required for efficient cotranscriptional splicing of a large set of exons. Post-translationally, phosphorylated on Ser-15 (H2BS14ph) by STK4/MST1 during apoptosis; which facilitates apoptotic chromatin condensation. Also phosphorylated on Ser-15 in response to DNA double strand breaks (DSBs), and in correlation with somatic hypermutation and immunoglobulin class-switch recombination. Phosphorylation at Ser-37 (H2BS36ph) by AMPK in response to stress promotes transcription. GlcNAcylation at Ser-113 promotes monoubiquitination of Lys-121. It fluctuates in response to extracellular glucose, and associates with transcribed genes. In terms of processing, ADP-ribosylated by PARP1 or PARP2 on Ser-7 (H2BS6ADPr) in response to DNA damage. H2BS6ADPr promotes recruitment of CHD1L. Mono-ADP-ribosylated on Glu-3 (H2BE2ADPr) by PARP3 in response to single-strand breaks. Poly ADP-ribosylation on Glu-36 (H2BE35ADPr) by PARP1 regulates adipogenesis: it inhibits phosphorylation at Ser-37 (H2BS36ph), thereby blocking expression of pro-adipogenetic genes. Post-translationally, crotonylation (Kcr) is specifically present in male germ cells and marks testis-specific genes in post-meiotic cells, including X-linked genes that escape sex chromosome inactivation in haploid cells. Crotonylation marks active promoters and enhancers and confers resistance to transcriptional repressors. It is also associated with post-meiotically activated genes on autosomes. Lactylated in macrophages by EP300/P300 by using lactoyl-CoA directly derived from endogenous or exogenous lactate, leading to stimulates gene transcription.

The protein resides in the nucleus. It is found in the chromosome. Core component of nucleosome. Nucleosomes wrap and compact DNA into chromatin, limiting DNA accessibility to the cellular machineries which require DNA as a template. Histones thereby play a central role in transcription regulation, DNA repair, DNA replication and chromosomal stability. DNA accessibility is regulated via a complex set of post-translational modifications of histones, also called histone code, and nucleosome remodeling. The protein is Histone H2B type 1-K of Bos taurus (Bovine).